The following is a 316-amino-acid chain: Phospholipase A1 3 (316 aa).

Residues 1–4 (ADDL) form the signal peptide. A propeptide spanning residues 5–14 (TTLRNGTLDR) is cleaved from the precursor. An intrachain disulfide couples C20 to C103. S153 functions as the Nucleophile in the catalytic mechanism. The active-site Charge relay system is the D181. 2 disulfides stabilise this stretch: C192–C197 and C235–C240. Residue H242 is the Charge relay system of the active site. Cystine bridges form between C257–C284, C258–C309, and C277–C282.

It belongs to the AB hydrolase superfamily. Lipase family. As to expression, expressed by the venom gland.

It localises to the secreted. The catalysed reaction is a 1,2-diacyl-sn-glycero-3-phosphocholine + H2O = a 2-acyl-sn-glycero-3-phosphocholine + a fatty acid + H(+). Catalyzes the hydrolysis of phosphatidylcholine with phospholipase A1 activity. May act as an allergen and induce hemolytic activity. The protein is Phospholipase A1 3 of Polistes dominula (European paper wasp).